We begin with the raw amino-acid sequence, 123 residues long: Small ribosomal subunit protein uS12c (123 aa).

The protein belongs to the universal ribosomal protein uS12 family. In terms of assembly, part of the 30S ribosomal subunit.

The protein resides in the plastid. The protein localises to the chloroplast. In terms of biological role, with S4 and S5 plays an important role in translational accuracy. Located at the interface of the 30S and 50S subunits. The protein is Small ribosomal subunit protein uS12c (rps12) of Anthoceros angustus (Hornwort).